The primary structure comprises 294 residues: Acetyl-coenzyme A carboxylase carboxyl transferase subunit beta (294 aa).

The region spanning 30–294 is the CoA carboxyltransferase N-terminal domain; that stretch reads IMTKCPECKK…PEVGGEADGE (265 aa). Positions 34, 37, 53, and 56 each coordinate Zn(2+). The segment at 34 to 56 adopts a C4-type zinc-finger fold; it reads CPECKKIMYTKELQKNLMVCNYC.

This sequence belongs to the AccD/PCCB family. As to quaternary structure, acetyl-CoA carboxylase is a heterohexamer composed of biotin carboxyl carrier protein (AccB), biotin carboxylase (AccC) and two subunits each of ACCase subunit alpha (AccA) and ACCase subunit beta (AccD). Requires Zn(2+) as cofactor.

The protein localises to the cytoplasm. The catalysed reaction is N(6)-carboxybiotinyl-L-lysyl-[protein] + acetyl-CoA = N(6)-biotinyl-L-lysyl-[protein] + malonyl-CoA. Its pathway is lipid metabolism; malonyl-CoA biosynthesis; malonyl-CoA from acetyl-CoA: step 1/1. Component of the acetyl coenzyme A carboxylase (ACC) complex. Biotin carboxylase (BC) catalyzes the carboxylation of biotin on its carrier protein (BCCP) and then the CO(2) group is transferred by the transcarboxylase to acetyl-CoA to form malonyl-CoA. The polypeptide is Acetyl-coenzyme A carboxylase carboxyl transferase subunit beta (Listeria monocytogenes serotype 4a (strain HCC23)).